The sequence spans 145 residues: Large ribosomal subunit protein bL9 (145 aa).

Belongs to the bacterial ribosomal protein bL9 family.

Functionally, binds to the 23S rRNA. The sequence is that of Large ribosomal subunit protein bL9 from Ureaplasma urealyticum serovar 10 (strain ATCC 33699 / Western).